A 187-amino-acid polypeptide reads, in one-letter code: MEDKKIAMEETIRSIFDFIGDDRHREGLLDTPKRVVKSWDKLYSGYTQDPREILGTVFEDGACDEMVVLKNIEFYSMCEHHMLPFFGKVSIGYIPDQKVVGISKLARLVEVFARRLQIQEKMTGQIADTLMEVLQPKGAMVVAEATHMCMVMRGVEKQQSVMVTSAVRGLFKRDARTREEFMGHIRH.

3 residues coordinate Zn(2+): C78, H81, and C149.

This sequence belongs to the GTP cyclohydrolase I family. In terms of assembly, toroid-shaped homodecamer, composed of two pentamers of five dimers.

The enzyme catalyses GTP + H2O = 7,8-dihydroneopterin 3'-triphosphate + formate + H(+). The protein operates within cofactor biosynthesis; 7,8-dihydroneopterin triphosphate biosynthesis; 7,8-dihydroneopterin triphosphate from GTP: step 1/1. The polypeptide is GTP cyclohydrolase 1 (Wolinella succinogenes (strain ATCC 29543 / DSM 1740 / CCUG 13145 / JCM 31913 / LMG 7466 / NCTC 11488 / FDC 602W) (Vibrio succinogenes)).